The following is a 354-amino-acid chain: Vanillate O-demethylase oxygenase subunit (354 aa).

In terms of domain architecture, Rieske spans 7 to 107 (WYVACTPDEI…VEERYGFIWV (101 aa)). Residues C47, H49, C66, and H69 each contribute to the [2Fe-2S] cluster site.

Belongs to the bacterial ring-hydroxylating dioxygenase alpha subunit family. As to quaternary structure, this demethylase system consists of two proteins: an oxygenase and an oxygenase reductase. [2Fe-2S] cluster is required as a cofactor. The cofactor is Fe cation.

The catalysed reaction is vanillate + NADH + O2 + H(+) = 3,4-dihydroxybenzoate + formaldehyde + NAD(+) + H2O. It functions in the pathway xenobiotic degradation; vanillyl-alcohol degradation. The sequence is that of Vanillate O-demethylase oxygenase subunit (vanA) from Pseudomonas sp. (strain HR199 / DSM 7063).